A 476-amino-acid polypeptide reads, in one-letter code: ATP sulfurylase 2 (476 aa).

A chloroplast-targeting transit peptide spans 1–56; that stretch reads MSLMIRSSYVSHITLFQPRNSKPSSFTNQISFLSSSNNNPFLNLVYKRNLTMQSVS.

It belongs to the sulfate adenylyltransferase family. As to quaternary structure, homotetramer. In terms of tissue distribution, mostly expressed in leaves or cotyledons.

The protein localises to the plastid. Its subcellular location is the chloroplast. The protein resides in the cytoplasm. The catalysed reaction is sulfate + ATP + H(+) = adenosine 5'-phosphosulfate + diphosphate. The protein operates within sulfur metabolism; hydrogen sulfide biosynthesis; sulfite from sulfate: step 1/3. In Arabidopsis thaliana (Mouse-ear cress), this protein is ATP sulfurylase 2 (APS2).